Here is a 609-residue protein sequence, read N- to C-terminus: NADH-ubiquinone oxidoreductase chain 5 (609 aa).

The next 16 membrane-spanning stretches (helical) occupy residues 3–23 (VINLFASSIITTLSMLTLPIV), 46–66 (AFMISMIPTTMFIYSGQEMII), 90–110 (MIFVPVALFVTWSIMEFSMWY), 115–135 (PFINRFFKYLLMFLITMMILV), 140–160 (LFQLFIGWEGVGIMSFLLIGW), 174–194 (AVLYNRIGDVGFIMAMAWFLI), 216–236 (LMGLLLAATGKSAQFGLHPWL), 244–264 (TPVSALLHSSTMVVAGVFLLI), 276–296 (MQTTTLCLGAITTLFTAICAL), 304–323 (IIAFSTSSQLGLMIVTIGIN), 328–350 (AFLHICTHAFFKAMLFMCSGSII), 368–388 (VLPFTTTSLIVGSLALTGMPF), 410–432 (WALLLTLVATSMTAAYSTRIMFF), 460–480 (LLLGSIFAGYLISYNITPTST), 485–505 (MPYYLKLTALTVTLLGFILAL), and 585–605 (GLIKLYFLSFIITLILALMMI).

It belongs to the complex I subunit 5 family.

It is found in the mitochondrion inner membrane. It carries out the reaction a ubiquinone + NADH + 5 H(+)(in) = a ubiquinol + NAD(+) + 4 H(+)(out). Its function is as follows. Core subunit of the mitochondrial membrane respiratory chain NADH dehydrogenase (Complex I) that is believed to belong to the minimal assembly required for catalysis. Complex I functions in the transfer of electrons from NADH to the respiratory chain. The immediate electron acceptor for the enzyme is believed to be ubiquinone. The polypeptide is NADH-ubiquinone oxidoreductase chain 5 (MT-ND5) (Phoca vitulina (Harbor seal)).